Here is a 147-residue protein sequence, read N- to C-terminus: Transcriptional repressor NrdR (147 aa).

A zinc finger lies at 3-34; that stretch reads CPFCGHEDTQVAETRESDEGDVIRRRRRCPSC. In terms of domain architecture, ATP-cone spans 49–139; it reads PAIVKKDGSR…VYRSFEGVDE (91 aa).

Belongs to the NrdR family. The cofactor is Zn(2+).

Negatively regulates transcription of bacterial ribonucleotide reductase nrd genes and operons by binding to NrdR-boxes. This is Transcriptional repressor NrdR from Methylibium petroleiphilum (strain ATCC BAA-1232 / LMG 22953 / PM1).